Consider the following 72-residue polypeptide: Small ribosomal subunit protein bS18 (72 aa).

This sequence belongs to the bacterial ribosomal protein bS18 family. Part of the 30S ribosomal subunit. Forms a tight heterodimer with protein bS6.

Its function is as follows. Binds as a heterodimer with protein bS6 to the central domain of the 16S rRNA, where it helps stabilize the platform of the 30S subunit. In Francisella tularensis subsp. novicida (strain U112), this protein is Small ribosomal subunit protein bS18.